Reading from the N-terminus, the 314-residue chain is ATP synthase gamma chain (314 aa).

It belongs to the ATPase gamma chain family. As to quaternary structure, F-type ATPases have 2 components, CF(1) - the catalytic core - and CF(0) - the membrane proton channel. CF(1) has five subunits: alpha(3), beta(3), gamma(1), delta(1), epsilon(1). CF(0) has three main subunits: a, b and c.

It localises to the cellular thylakoid membrane. Produces ATP from ADP in the presence of a proton gradient across the membrane. The gamma chain is believed to be important in regulating ATPase activity and the flow of protons through the CF(0) complex. The sequence is that of ATP synthase gamma chain from Picosynechococcus sp. (strain ATCC 27264 / PCC 7002 / PR-6) (Agmenellum quadruplicatum).